Consider the following 324-residue polypeptide: NADH-cytochrome b5 reductase 2 (324 aa).

Residues 31-47 (IPLIGGITLAAGAGYYY) form a helical membrane-spanning segment. In terms of domain architecture, FAD-binding FR-type spans 70-178 (QGWIGLKLAH…KGPLPKYPWE (109 aa)). 181–216 (KHDHICLIAGGTGITPMYQLVRKIFSNPEDKTKVTL) provides a ligand contact to FAD.

Belongs to the flavoprotein pyridine nucleotide cytochrome reductase family. Requires FAD as cofactor.

Its subcellular location is the mitochondrion outer membrane. The catalysed reaction is 2 Fe(III)-[cytochrome b5] + NADH = 2 Fe(II)-[cytochrome b5] + NAD(+) + H(+). Functionally, may mediate the reduction of outer membrane cytochrome b5. This is NADH-cytochrome b5 reductase 2 (MCR1) from Ajellomyces capsulatus (strain NAm1 / WU24) (Darling's disease fungus).